A 1399-amino-acid chain; its full sequence is Alpha-glucan water dikinase 1, chloroplastic (1399 aa).

Residues 1–75 (MSNSVVHNLL…GRPLSFVPRA (75 aa)) constitute a chloroplast transit peptide. N-acetylvaline is present on valine 76. The disordered stretch occupies residues 265 to 306 (LLKKDNSNESPKSNGTSSSGREEKKKVSKQPERKKNYNTDKI). Residues 272-283 (NESPKSNGTSSS) are compositionally biased toward polar residues. Residues 284-306 (GREEKKKVSKQPERKKNYNTDKI) show a composition bias toward basic and acidic residues. The active-site Tele-phosphohistidine intermediate is the histidine 1004.

It belongs to the PEP-utilizing enzyme family. In terms of assembly, homodimer. Mg(2+) is required as a cofactor.

Its subcellular location is the plastid. The protein localises to the chloroplast. The enzyme catalyses [(1-&gt;4)-alpha-D-glucosyl](n) + n ATP + n H2O = [(1-&gt;4)-6-phospho-alpha-D-glucosyl](n) + n AMP + n phosphate + 2n H(+). Mediates the incorporation of phosphate into starch-like alpha-glucan, mostly at the C-6 position of glucose units. Acts as an overall regulator of starch mobilization. Required for starch degradation, suggesting that the phosphate content of starch regulates its degradability. In Arabidopsis thaliana (Mouse-ear cress), this protein is Alpha-glucan water dikinase 1, chloroplastic.